A 216-amino-acid polypeptide reads, in one-letter code: Capsule polysaccharide export ATP-binding protein CtrD (216 aa).

Positions 2 to 215 (ISVEHVSKRY…DKAYEYYNSL (214 aa)) constitute an ABC transporter domain. 38–45 (GRNGAGKS) serves as a coordination point for ATP.

It belongs to the ABC transporter superfamily.

It is found in the cell inner membrane. It carries out the reaction ATP + H2O + capsular polysaccharide-[capsular polysaccharide-binding protein]Side 1 = ADP + phosphate + capsular polysaccharideSide 2 + [capsular polysaccharide-binding protein]Side 1.. Its function is as follows. Putative ATP-binding protein, and an energy-coupling component of capsule polysaccharide export apparatus. The sequence is that of Capsule polysaccharide export ATP-binding protein CtrD (ctrD) from Neisseria meningitidis serogroup B (strain ATCC BAA-335 / MC58).